The primary structure comprises 378 residues: Acetylornithine deacetylase (378 aa).

H76 is a binding site for Zn(2+). D78 is an active-site residue. A Zn(2+)-binding site is contributed by D108. Residue E140 is part of the active site. 3 residues coordinate Zn(2+): E141, E165, and H351.

Belongs to the peptidase M20A family. ArgE subfamily. As to quaternary structure, homodimer. The cofactor is Zn(2+). Co(2+) serves as cofactor. Glutathione is required as a cofactor.

The protein localises to the cytoplasm. The catalysed reaction is N(2)-acetyl-L-ornithine + H2O = L-ornithine + acetate. It functions in the pathway amino-acid biosynthesis; L-arginine biosynthesis; L-ornithine from N(2)-acetyl-L-ornithine (linear): step 1/1. Functionally, catalyzes the hydrolysis of the amide bond of N(2)-acetylated L-amino acids. Cleaves the acetyl group from N-acetyl-L-ornithine to form L-ornithine, an intermediate in L-arginine biosynthesis pathway, and a branchpoint in the synthesis of polyamines. In Aliivibrio fischeri (strain MJ11) (Vibrio fischeri), this protein is Acetylornithine deacetylase.